We begin with the raw amino-acid sequence, 299 residues long: MQENTRLRIAIQKSGRLSKESIELLSECGVKMHIHEQSLIAFSTNLPIDILRVRDDDIPGLIFDGVVDLGIIGENVLEENELERQSLGENPSYKLLKKLDFGYCRLSLALPQEKKFQNLKDFEGLRIATSYPQLLKRFMKENGINYKNCMLTGSVEVAPRANLADAICDLVSSGATLQANNLKEVKVIYESRACLIQKENALSKEKQTLVDKIMLRVAGVMQARESKYIMLHAPKEKLDKIQALLPGVERPTILPLAHDEKNVALHMVSKENLFWETMEALKEEGASSILVLPIEKMLK.

Belongs to the ATP phosphoribosyltransferase family. Long subfamily. Mg(2+) serves as cofactor.

It is found in the cytoplasm. It carries out the reaction 1-(5-phospho-beta-D-ribosyl)-ATP + diphosphate = 5-phospho-alpha-D-ribose 1-diphosphate + ATP. The protein operates within amino-acid biosynthesis; L-histidine biosynthesis; L-histidine from 5-phospho-alpha-D-ribose 1-diphosphate: step 1/9. Feedback inhibited by histidine. Catalyzes the condensation of ATP and 5-phosphoribose 1-diphosphate to form N'-(5'-phosphoribosyl)-ATP (PR-ATP). Has a crucial role in the pathway because the rate of histidine biosynthesis seems to be controlled primarily by regulation of HisG enzymatic activity. In Campylobacter jejuni subsp. jejuni serotype O:23/36 (strain 81-176), this protein is ATP phosphoribosyltransferase.